The sequence spans 727 residues: Kinesin-like protein KIN-14G (727 aa).

Disordered stretches follow at residues 100-156, 172-194, and 336-357; these read QTAP…LHLR, HLSA…SCSR, and LAGG…GATR. Positions 114–133 are enriched in polar residues; the sequence is VASSTAGRASRTKSASSTGR. The Kinesin motor domain maps to 381–710; it reads NIRVFCRVRP…LRFAARVNSC (330 aa). 461–468 is a binding site for ATP; the sequence is GQTGSGKT.

Belongs to the TRAFAC class myosin-kinesin ATPase superfamily. Kinesin family. KIN-14 subfamily.

The polypeptide is Kinesin-like protein KIN-14G (Oryza sativa subsp. japonica (Rice)).